A 489-amino-acid polypeptide reads, in one-letter code: Cryptochrome DASH (489 aa).

One can recognise a Photolyase/cryptochrome alpha/beta domain in the interval 6–140; the sequence is PTVLVWFRND…EAKGYWGSTL (135 aa).

Belongs to the DNA photolyase class-1 family. It depends on FAD as a cofactor. Requires (6R)-5,10-methylene-5,6,7,8-tetrahydrofolate as cofactor.

Functionally, may have a photoreceptor function. Binds DNA; represses transcription of at least 8 genes, including slr0364 and slr1866. Does not encode a DNA photolyase function. Its disruption does not affect circadian rhythm. This chain is Cryptochrome DASH (cry), found in Synechocystis sp. (strain ATCC 27184 / PCC 6803 / Kazusa).